Here is a 348-residue protein sequence, read N- to C-terminus: Probable WRKY transcription factor 27 (348 aa).

Disordered regions lie at residues Val-19–Ser-52, Thr-67–Pro-90, Leu-133–Arg-153, and Gly-218–Asn-320. A compositionally biased stretch (pro residues) spans Ser-75–Ala-85. A compositionally biased stretch (low complexity) spans Leu-133–Leu-142. A compositionally biased stretch (basic residues) spans Arg-143–Arg-153. Residues Thr-159–Pro-225 constitute a DNA-binding region (WRKY). Over residues Arg-228 to Val-242 the composition is skewed to polar residues. A compositionally biased stretch (acidic residues) spans Asp-274–Asp-315.

This sequence belongs to the WRKY group II-e family.

It is found in the nucleus. Functionally, transcription factor. Interacts specifically with the W box (5'-(T)TGAC[CT]-3'), a frequently occurring elicitor-responsive cis-acting element. In Arabidopsis thaliana (Mouse-ear cress), this protein is Probable WRKY transcription factor 27 (WRKY27).